The sequence spans 391 residues: Pyruvate dehydrogenase E1 component subunit alpha, mitochondrial (391 aa).

The transit peptide at 1–26 (MALSTSRAINHIMKPLSAAVCATRRL) directs the protein to the mitochondrion. Residues His-92, Tyr-118, Arg-119, Gly-167, Val-169, Asp-198, Gly-199, Ala-200, Asn-227, and Tyr-229 each coordinate pyruvate. The thiamine diphosphate site is built by Tyr-118, Arg-119, Gly-167, Val-169, Asp-198, Gly-199, Ala-200, and Asn-227. Asp-198 serves as a coordination point for Mg(2+). Mg(2+)-binding residues include Asn-227 and Tyr-229. His-293 contacts thiamine diphosphate. The interval 294 to 313 (SMSDPGSTYRTRDEISGVRQ) is disordered. Residues 303-313 (RTRDEISGVRQ) show a composition bias toward basic and acidic residues.

Tetramer of 2 alpha and 2 beta subunits. The cofactor is thiamine diphosphate. Requires Mg(2+) as cofactor.

It localises to the mitochondrion matrix. It carries out the reaction N(6)-[(R)-lipoyl]-L-lysyl-[protein] + pyruvate + H(+) = N(6)-[(R)-S(8)-acetyldihydrolipoyl]-L-lysyl-[protein] + CO2. E1 activity is regulated by phosphorylation (inactivation) and dephosphorylation (activation) of the alpha subunit. Its function is as follows. The pyruvate dehydrogenase complex catalyzes the overall conversion of pyruvate to acetyl-CoA and CO(2). It contains multiple copies of three enzymatic components: pyruvate dehydrogenase (E1), dihydrolipoamide acetyltransferase (E2) and lipoamide dehydrogenase (E3). This is Pyruvate dehydrogenase E1 component subunit alpha, mitochondrial from Solanum tuberosum (Potato).